A 284-amino-acid chain; its full sequence is Tropomyosin (284 aa).

N-acetylmethionine is present on Met-1. A disordered region spans residues 1–42 (MDAIKKKMQAMKLEKDNAMDRADTLEQQNKEANNRAEKSEEE). A coiled-coil region spans residues 1-284 (MDAIKKKMQA…DQTFSELSGY (284 aa)). Over residues 12-38 (KLEKDNAMDRADTLEQQNKEANNRAEK) the composition is skewed to basic and acidic residues.

This sequence belongs to the tropomyosin family. In terms of assembly, homodimer.

Its function is as follows. Tropomyosin, in association with the troponin complex, plays a central role in the calcium dependent regulation of muscle contraction. The protein is Tropomyosin of Pandalus borealis (Northern red shrimp).